The sequence spans 302 residues: Ribonucleoside-diphosphate reductase small subunit (302 aa).

Fe cation contacts are provided by Glu-61, Glu-91, and His-94. Residue Tyr-98 is part of the active site. The chain crosses the membrane as a helical span at residues 147–167 (ILVFLLIEGIFFISSFYSIAL). 3 residues coordinate Fe cation: Glu-154, Glu-188, and His-191.

The protein belongs to the ribonucleoside diphosphate reductase small chain family. Heterotetramer composed of a homodimer of the large subunit (R1) and a homodimer of the small subunit (R2). Larger multisubunit protein complex are also active, composed of (R1)n(R2)n. Requires Fe cation as cofactor.

The protein localises to the host membrane. It catalyses the reaction a 2'-deoxyribonucleoside 5'-diphosphate + [thioredoxin]-disulfide + H2O = a ribonucleoside 5'-diphosphate + [thioredoxin]-dithiol. Ribonucleoside-diphosphate reductase holoenzyme provides the precursors necessary for viral DNA synthesis. Allows virus growth in non-dividing cells, as well as reactivation from latency in infected hosts. Catalyzes the biosynthesis of deoxyribonucleotides from the corresponding ribonucleotides. This is Ribonucleoside-diphosphate reductase small subunit from Homo sapiens (Human).